Consider the following 1320-residue polypeptide: Sister chromatid cohesion protein PDS5 homolog A (1320 aa).

HEAT repeat units lie at residues 156–195 (NEIFIQLFKTLFSVINNSHNQKVQMHMLDLMSSIIMEGDG), 272–310 (PLLLVSVMPQLEFKLKSNDGEERLAVVKLLAKLFGAKDS), 388–426 (NLVNDQLLGFVRERMLDKRWRVRKEAMMGLAQLFKKYCL), 709–747 (PQIRSTLIPILHQKAKRGTPHQAKQAVHCIHAIFHNKEV), and 990–1028 (SLLPEYVVPYMIHLLAHDPDLTKPQDLEQLRDVKECLWF). Over residues 1158–1179 (TFTSETGSNASTNSQPSSPATN) the composition is skewed to polar residues. Positions 1158-1320 (TFTSETGSNA…APQRQIDLQR (163 aa)) are disordered. The segment covering 1180-1194 (KSRDVSSEVGARENE) has biased composition (basic and acidic residues). Residues 1225 to 1241 (GTENSVSSNPSAGSQPP) are compositionally biased toward polar residues. Residues 1255–1267 (AGAATQEKEAGAT) show a composition bias toward low complexity. Over residues 1283 to 1293 (QDPSSTASTDA) the composition is skewed to polar residues. Residues 1294 to 1309 (LSDKTPKQQKEAEPKR) show a composition bias toward basic and acidic residues.

It belongs to the PDS5 family. As to quaternary structure, interacts with the cohesin complex. Binds chromatin in a cohesin-dependent manner.

It localises to the nucleus. Its function is as follows. May regulate sister chromatid cohesion during mitosis and couple it to DNA replication. This is Sister chromatid cohesion protein PDS5 homolog A from Danio rerio (Zebrafish).